The following is a 377-amino-acid chain: All-trans-retinol dehydrogenase [NAD(+)] ADH4 (377 aa).

Residue cysteine 47 coordinates Zn(2+). Threonine 49 is a binding site for NAD(+). 6 residues coordinate Zn(2+): histidine 68, cysteine 98, cysteine 101, cysteine 104, cysteine 112, and cysteine 179. NAD(+)-binding positions include 204 to 209 (GLGCVG), aspartate 228, lysine 233, 297 to 299 (VGA), 320 to 322 (TFF), and arginine 372.

The protein belongs to the zinc-containing alcohol dehydrogenase family. Class-II subfamily. In terms of assembly, dimer. Zn(2+) serves as cofactor. As to expression, liver specific.

It is found in the cytoplasm. It carries out the reaction all-trans-retinol + NAD(+) = all-trans-retinal + NADH + H(+). The enzyme catalyses 9-cis-retinol + NAD(+) = 9-cis-retinal + NADH + H(+). It catalyses the reaction 20-hydroxy-(5Z,8Z,11Z,14Z)-eicosatetraenoate + NAD(+) = 20-oxo-(5Z,8Z,11Z,14Z)-eicosatetraenoate + NADH + H(+). The catalysed reaction is 20-oxo-(5Z,8Z,11Z,14Z)-eicosatetraenoate + NAD(+) + H2O = (5Z,8Z,11Z,14Z)-eicosatetraenedioate + NADH + 2 H(+). It carries out the reaction 1,4-benzoquinone + NADH + H(+) = hydroquinone + NAD(+). Oxidation of 20-HETE is inhibited by low concentrations of N-heptylformamide. Oxidation of 20-HETE is a decreased by 55-65% by either all-trans-retinol or all-trans-retinoic acid. Strongly inhibited by omega-hydroxy fatty acids. Catalyzes the NAD-dependent oxidation of either all-trans-retinol or 9-cis-retinol. Also oxidizes long chain omega-hydroxy fatty acids, such as 20-HETE, producing both the intermediate aldehyde, 20-oxoarachidonate and the end product, a dicarboxylic acid, (5Z,8Z,11Z,14Z)-eicosatetraenedioate. Also catalyzes the reduction of benzoquinones. In Mus musculus (Mouse), this protein is All-trans-retinol dehydrogenase [NAD(+)] ADH4.